The following is a 500-amino-acid chain: Protein-tyrosine sulfotransferase (500 aa).

A signal peptide spans 1 to 24 (MQMNSVWKLSLGLLLLSSVIGSFA). Residues 25–467 (ELDFGHCETL…SVLGEMGEEK (443 aa)) lie on the Lumenal side of the membrane. Catalysis depends on residues Arg-121 and Glu-142. Asn-156, Asn-248, Asn-315, Asn-343, Asn-359, and Asn-395 each carry an N-linked (GlcNAc...) asparagine glycan. A helical transmembrane segment spans residues 468-488 (LWKFVPVALMLLLIVLFFLFV). Residues 489–500 (NAKRRRTSKVKI) lie on the Cytoplasmic side of the membrane.

As to expression, expressed throughout the plant body, highest levels of expression are in the root apical meristem.

The protein localises to the golgi apparatus membrane. It carries out the reaction L-tyrosyl-[protein] + 3'-phosphoadenylyl sulfate = O-sulfo-L-tyrosine-[protein] + adenosine 3',5'-bisphosphate + H(+). Its function is as follows. Catalyzes the O-sulfation of tyrosine residues within acidic motifs of polypeptides. The sequence is that of Protein-tyrosine sulfotransferase (TPST) from Arabidopsis thaliana (Mouse-ear cress).